The following is a 72-amino-acid chain: Large ribosomal subunit protein uL30 (72 aa).

It belongs to the universal ribosomal protein uL30 family. Part of the 50S ribosomal subunit.

The polypeptide is Large ribosomal subunit protein uL30 (Mycobacterium ulcerans (strain Agy99)).